Consider the following 207-residue polypeptide: Phosphatidylinositol phosphate synthase (207 aa).

A run of 2 helical transmembrane segments spans residues 21–44 (LRAH…MALI) and 50–67 (WLWQ…SDSL). 28 to 31 (DVVT) lines the a CDP-1,2-diacyl-sn-glycerol pocket. Residues D65 and D68 each coordinate Mg(2+). Positions 69, 73, and 79 each coordinate a CDP-1,2-diacyl-sn-glycerol. Residues D86 and D90 each coordinate Mg(2+). 4 helical membrane passes run 88–106 (TLDR…LYFA), 112–131 (VLWT…TSYV), 152–170 (RLLV…RVGA), and 176–195 (VVAL…ITVV). D90 functions as the Proton acceptor in the catalytic mechanism.

Belongs to the CDP-alcohol phosphatidyltransferase class-I family. As to quaternary structure, homodimer. It depends on Mg(2+) as a cofactor.

Its subcellular location is the cell membrane. The enzyme catalyses a CDP-1,2-diacyl-sn-glycerol + 1D-myo-inositol 3-phosphate = a 1,2-diacyl-sn-glycero-3-phospho-(1D-myo-inositol-3-phosphate) + CMP + H(+). The catalysed reaction is 1,2-di-(9Z-octadecenoyl)-sn-glycero-3-cytidine-5'-diphosphate + 1D-myo-inositol 3-phosphate = 1,2-di-(9Z-octadecenoyl)-sn-glycero-3-phospho-(1D-myo-inositol-3-phosphate) + CMP + H(+). It functions in the pathway phospholipid metabolism; phosphatidylinositol phosphate biosynthesis. In terms of biological role, catalyzes the conjugation of the 1'-hydroxyl group of D-myo-inositol-3-phosphate (also named L-myo-inositol-1-phosphate) with a lipid tail of cytidine diphosphate diacylglycerol (CDP-DAG), forming phosphatidylinositol phosphate (PIP) and CMP. PIP is a precursor of phosphatidylinositol (PI) which is an essential lipid required for cell wall formation. The protein is Phosphatidylinositol phosphate synthase of Cutibacterium acnes (strain DSM 16379 / KPA171202) (Propionibacterium acnes).